A 359-amino-acid polypeptide reads, in one-letter code: Diacyltrehalose acyltransferase Chp2 (359 aa).

A helical transmembrane segment spans residues 4-24 (VIAGAFAVWLVGWAGGFGTAI). In terms of domain architecture, PE-PPE spans 79–316 (PNAKHDLIDY…VLQPQIDAAY (238 aa)).

This sequence belongs to the mycobacterial PPE family.

It localises to the cell inner membrane. With respect to regulation, activity is probably potentiated by the DAT/PAT transporter MmpL10. Inhibited by the lipase inhibitor tetrahydrolipstatin (THL). In terms of biological role, involved in the final steps of polyacyltrehalose (PAT) biosynthesis. Catalyzes the transfer of three mycolipenoyl groups onto diacyltrehalose (DAT) to form PAT. This Mycobacterium tuberculosis (strain ATCC 25618 / H37Rv) protein is Diacyltrehalose acyltransferase Chp2.